The following is an 85-amino-acid chain: CDC42 small effector protein 2 (85 aa).

Residues cysteine 10 and cysteine 11 are each lipidated (S-palmitoyl cysteine). The CRIB domain occupies 29-42 (IGEPTNFVHTAHVG).

Belongs to the CDC42SE/SPEC family.

Its subcellular location is the cytoplasm. It is found in the cytoskeleton. It localises to the cell membrane. In terms of biological role, probably involved in the organization of the actin cytoskeleton by acting downstream of CDC42, inducing actin filament assembly. This chain is CDC42 small effector protein 2 (cdc42se2), found in Danio rerio (Zebrafish).